The sequence spans 192 residues: Cysteine and glycine-rich protein 1 (192 aa).

The LIM zinc-binding 1 domain occupies 10–61 (CGVCQKAVYFAEEVQCEGSSFHKSCFLCMVCKKNLDSTTVAVHGDEIYCKSC). The Nuclear localization signal signature appears at 64-69 (KKYGPK). Residues 118-169 (CPRCGQAVYAAEKVIGAGKSWHKSCFRCAKCGKSLESTTLADKDGEIYCKGC) form the LIM zinc-binding 2 domain.

In terms of assembly, probable monomer. Interacts with ZYX. As to expression, most prominent in tissues that are enriched in smooth muscle cells, such as gizzard, stomach, and intestine. Lower level in the heart, no expression in liver, skeletal muscle, or brain.

It localises to the nucleus. Its subcellular location is the cytoplasm. It is found in the cytoskeleton. Heat stable protein, that interacts with zyxin/ZYX. May be a component of a signal transduction pathway that mediates adhesion-stimulated changes in gene expression. This chain is Cysteine and glycine-rich protein 1 (CSRP1), found in Gallus gallus (Chicken).